The chain runs to 325 residues: Elongation factor P--(R)-beta-lysine ligase (325 aa).

A substrate-binding site is contributed by serine 76–glutamate 78. ATP contacts are provided by residues arginine 100 to glutamate 102 and asparagine 109. Tyrosine 118 contributes to the substrate binding site. Glutamate 244–leucine 245 provides a ligand contact to ATP. Glutamate 251 contacts substrate. Glycine 300 serves as a coordination point for ATP.

The protein belongs to the class-II aminoacyl-tRNA synthetase family. EpmA subfamily. Homodimer.

The catalysed reaction is D-beta-lysine + L-lysyl-[protein] + ATP = N(6)-((3R)-3,6-diaminohexanoyl)-L-lysyl-[protein] + AMP + diphosphate + H(+). In terms of biological role, with EpmB is involved in the beta-lysylation step of the post-translational modification of translation elongation factor P (EF-P) on 'Lys-34'. Catalyzes the ATP-dependent activation of (R)-beta-lysine produced by EpmB, forming a lysyl-adenylate, from which the beta-lysyl moiety is then transferred to the epsilon-amino group of EF-P 'Lys-34'. This Escherichia fergusonii (strain ATCC 35469 / DSM 13698 / CCUG 18766 / IAM 14443 / JCM 21226 / LMG 7866 / NBRC 102419 / NCTC 12128 / CDC 0568-73) protein is Elongation factor P--(R)-beta-lysine ligase.